Consider the following 264-residue polypeptide: Hemin import ATP-binding protein HmuV (264 aa).

Residues isoleucine 2 to alanine 241 enclose the ABC transporter domain. Position 34–41 (glycine 34–threonine 41) interacts with ATP.

The protein belongs to the ABC transporter superfamily. Heme (hemin) importer (TC 3.A.1.14.5) family. The complex is composed of two ATP-binding proteins (HmuV), two transmembrane proteins (HmuU) and a solute-binding protein (HmuT).

Its subcellular location is the cell inner membrane. Its function is as follows. Part of the ABC transporter complex HmuTUV involved in hemin import. Responsible for energy coupling to the transport system. This chain is Hemin import ATP-binding protein HmuV, found in Rhizobium johnstonii (strain DSM 114642 / LMG 32736 / 3841) (Rhizobium leguminosarum bv. viciae).